The sequence spans 431 residues: tRNA(Ile)-lysidine synthase (431 aa).

ATP is bound at residue 20–25 (SGGLDS).

This sequence belongs to the tRNA(Ile)-lysidine synthase family.

It localises to the cytoplasm. It carries out the reaction cytidine(34) in tRNA(Ile2) + L-lysine + ATP = lysidine(34) in tRNA(Ile2) + AMP + diphosphate + H(+). Functionally, ligates lysine onto the cytidine present at position 34 of the AUA codon-specific tRNA(Ile) that contains the anticodon CAU, in an ATP-dependent manner. Cytidine is converted to lysidine, thus changing the amino acid specificity of the tRNA from methionine to isoleucine. The chain is tRNA(Ile)-lysidine synthase from Escherichia coli O157:H7.